The following is an 82-amino-acid chain: MTRILLLLLRFYQYFISPLLSNNCRFHPTCSEYAKEAISMHGSIKGLWLTFKRIIKCQPFCDGGYDTVPISIKNSKPLNKKI.

The protein belongs to the UPF0161 family.

The protein localises to the cell inner membrane. Its function is as follows. Could be involved in insertion of integral membrane proteins into the membrane. In Rickettsia massiliae (strain Mtu5), this protein is Putative membrane protein insertion efficiency factor.